The following is a 467-amino-acid chain: Glycogen synthase (467 aa).

K15 is an ADP-alpha-D-glucose binding site.

This sequence belongs to the glycosyltransferase 1 family. Bacterial/plant glycogen synthase subfamily.

The enzyme catalyses [(1-&gt;4)-alpha-D-glucosyl](n) + ADP-alpha-D-glucose = [(1-&gt;4)-alpha-D-glucosyl](n+1) + ADP + H(+). It functions in the pathway glycan biosynthesis; glycogen biosynthesis. In terms of biological role, synthesizes alpha-1,4-glucan chains using ADP-glucose. The protein is Glycogen synthase of Desulfitobacterium hafniense (strain DSM 10664 / DCB-2).